The sequence spans 146 residues: Hemoglobin subunit beta (146 aa).

At V1 the chain carries N-acetylvaline. The Globin domain maps to 2–146; sequence HLTPEEKNAV…VANALAHKYH (145 aa). T12 is subject to Phosphothreonine. S44 is subject to Phosphoserine. K59 carries the post-translational modification N6-acetyllysine. Residue H63 coordinates heme b. N6-acetyllysine is present on K82. Residue H92 participates in heme b binding. C93 is subject to S-nitrosocysteine. Residue K144 is modified to N6-acetyllysine.

The protein belongs to the globin family. Heterotetramer of two alpha chains and two beta chains. Red blood cells.

Its function is as follows. Involved in oxygen transport from the lung to the various peripheral tissues. The sequence is that of Hemoglobin subunit beta (HBB) from Macaca mulatta (Rhesus macaque).